Here is a 95-residue protein sequence, read N- to C-terminus: Transcription and mRNA export factor ENY2-2 (95 aa).

The protein belongs to the ENY2 family. Component of the nuclear pore complex (NPC)-associated TREX-2 complex (transcription and export complex 2). Component of the SAGA transcription coactivator-HAT complex. Within the SAGA complex, participates in a subcomplex of SAGA called the DUB module (deubiquitination module).

The protein resides in the nucleus. It localises to the nucleoplasm. Its function is as follows. Involved in mRNA export coupled transcription activation by association with both the TREX-2 and the SAGA complexes. The transcription regulatory histone acetylation (HAT) complex SAGA is a multiprotein complex that activates transcription by remodeling chromatin and mediating histone acetylation and deubiquitination. Within the SAGA complex, participates in a subcomplex that specifically deubiquitinates histones. The SAGA complex is recruited to specific gene promoters by activators, where it is required for transcription. The TREX-2 complex functions in docking export-competent ribonucleoprotein particles (mRNPs) to the nuclear entrance of the nuclear pore complex (nuclear basket). TREX-2 participates in mRNA export and accurate chromatin positioning in the nucleus by tethering genes to the nuclear periphery. The protein is Transcription and mRNA export factor ENY2-2 (eny2-2) of Salmo salar (Atlantic salmon).